The sequence spans 161 residues: Phosphopantetheine adenylyltransferase (161 aa).

Position 9 (Thr9) interacts with substrate. ATP-binding positions include 9 to 10 (TF) and His17. Residues Lys41, Leu73, and Arg87 each coordinate substrate. ATP contacts are provided by residues 88 to 90 (GLR), Glu98, and 123 to 129 (LSYISST).

This sequence belongs to the bacterial CoaD family. As to quaternary structure, homohexamer. It depends on Mg(2+) as a cofactor.

The protein resides in the cytoplasm. It catalyses the reaction (R)-4'-phosphopantetheine + ATP + H(+) = 3'-dephospho-CoA + diphosphate. It participates in cofactor biosynthesis; coenzyme A biosynthesis; CoA from (R)-pantothenate: step 4/5. Reversibly transfers an adenylyl group from ATP to 4'-phosphopantetheine, yielding dephospho-CoA (dPCoA) and pyrophosphate. This Hahella chejuensis (strain KCTC 2396) protein is Phosphopantetheine adenylyltransferase.